A 273-amino-acid chain; its full sequence is MDSLTETTNALSNDTHAQGYQSVSTTRHVGHIREVVYDCVVEEFPVALIYNGISHAVMMTTPLDLEVFAIGFSLTEAIIDHPRQIYDIEIIKSDLGIQVEITIASEAFIKLKTHRRTLAGQTGCGICGIESLQQIQHTFPPVTHDFFVHWLDQIPDAMVQLQQQQPISAVTGGAHAAAWVVNGNILTVFEDVGRHNALDKLLGHLVKHDIDRSQGFVLMTSRASYELVKKCAQLNISLLATISAPTSLAIELAKRSGLKLASFCRQSRYVVYS.

Cys124 acts as the Cysteine persulfide intermediate in catalysis. Position 263–268 (263–268 (FCRQSR)) interacts with Mo-bis(molybdopterin guanine dinucleotide).

The protein belongs to the FdhD family.

The protein resides in the cytoplasm. Required for formate dehydrogenase (FDH) activity. Acts as a sulfur carrier protein that transfers sulfur from IscS to the molybdenum cofactor prior to its insertion into FDH. The sequence is that of Sulfur carrier protein FdhD from Acinetobacter baylyi (strain ATCC 33305 / BD413 / ADP1).